A 430-amino-acid polypeptide reads, in one-letter code: Serine--tRNA ligase (430 aa).

L-serine is bound at residue 237 to 239 (TAE). Position 268-270 (268-270 (RSE)) interacts with ATP. Residue glutamate 291 participates in L-serine binding. ATP is bound at residue 355 to 358 (EISS). An L-serine-binding site is contributed by serine 391.

Belongs to the class-II aminoacyl-tRNA synthetase family. Type-1 seryl-tRNA synthetase subfamily. As to quaternary structure, homodimer. The tRNA molecule binds across the dimer.

The protein resides in the cytoplasm. It carries out the reaction tRNA(Ser) + L-serine + ATP = L-seryl-tRNA(Ser) + AMP + diphosphate + H(+). The catalysed reaction is tRNA(Sec) + L-serine + ATP = L-seryl-tRNA(Sec) + AMP + diphosphate + H(+). It functions in the pathway aminoacyl-tRNA biosynthesis; selenocysteinyl-tRNA(Sec) biosynthesis; L-seryl-tRNA(Sec) from L-serine and tRNA(Sec): step 1/1. Catalyzes the attachment of serine to tRNA(Ser). Is also able to aminoacylate tRNA(Sec) with serine, to form the misacylated tRNA L-seryl-tRNA(Sec), which will be further converted into selenocysteinyl-tRNA(Sec). This chain is Serine--tRNA ligase, found in Salmonella paratyphi C (strain RKS4594).